The sequence spans 153 residues: Ribosomal RNA large subunit methyltransferase H (153 aa).

S-adenosyl-L-methionine contacts are provided by residues Leu70, Gly102, and 121 to 126; that span reads LSRMTF.

Belongs to the RNA methyltransferase RlmH family. Homodimer.

Its subcellular location is the cytoplasm. The catalysed reaction is pseudouridine(1915) in 23S rRNA + S-adenosyl-L-methionine = N(3)-methylpseudouridine(1915) in 23S rRNA + S-adenosyl-L-homocysteine + H(+). Functionally, specifically methylates the pseudouridine at position 1915 (m3Psi1915) in 23S rRNA. This Geotalea daltonii (strain DSM 22248 / JCM 15807 / FRC-32) (Geobacter daltonii) protein is Ribosomal RNA large subunit methyltransferase H.